Consider the following 185-residue polypeptide: PXMP2/4 family protein 4 (185 aa).

The next 3 helical transmembrane spans lie at 63 to 83 (MAVF…KYLD), 100 to 120 (IDQV…MGIL), and 141 to 161 (VSDC…ISSI).

This sequence belongs to the peroxisomal membrane protein PXMP2/4 family.

It localises to the membrane. The polypeptide is PXMP2/4 family protein 4 (Dictyostelium discoideum (Social amoeba)).